The following is a 366-amino-acid chain: Probable methyltransferase-like protein 24 (366 aa).

The first 29 residues, 1-29 (MARERPPGRGCGVLRRCLLGAVLLFGLRL), serve as a signal peptide directing secretion. A disordered region spans residues 36 to 110 (AGPGSPTRSA…GRPRRKGPRW (75 aa)). The span at 44–63 (SAPPGPAWRPPGPHLPPAPG) shows a compositional bias: pro residues. Positions 91-100 (TPEPGCCAPR) are enriched in low complexity.

The protein belongs to the methyltransferase superfamily.

It localises to the secreted. Functionally, probable methyltransferase. In Homo sapiens (Human), this protein is Probable methyltransferase-like protein 24 (METTL24).